Reading from the N-terminus, the 142-residue chain is Large ribosomal subunit protein uL11 (142 aa).

It belongs to the universal ribosomal protein uL11 family. As to quaternary structure, part of the ribosomal stalk of the 50S ribosomal subunit. Interacts with L10 and the large rRNA to form the base of the stalk. L10 forms an elongated spine to which L12 dimers bind in a sequential fashion forming a multimeric L10(L12)X complex. One or more lysine residues are methylated.

In terms of biological role, forms part of the ribosomal stalk which helps the ribosome interact with GTP-bound translation factors. This chain is Large ribosomal subunit protein uL11, found in Haemophilus influenzae (strain 86-028NP).